An 800-amino-acid chain; its full sequence is Receptor like protein 26 (800 aa).

Residues 1–19 form the signal peptide; that stretch reads MRLHFCSLLLLYCIVFVSS. At 20 to 733 the chain is on the extracellular side; that stretch reads FLTTDALACL…EEEDEVIEWK (714 aa). N-linked (GlcNAc...) asparagine glycans are attached at residues Asn49, Asn61, Asn83, Asn96, Asn101, and Asn113. LRR repeat units follow at residues 89–113, 115–138, 139–161, 162–185, 187–212, 214–235, 236–259, 260–281, 285–307, 308–332, 334–357, and 358–381; these read LHQL…EFSN, TRLE…ISNL, ILLT…VRNL, TKLS…LLPT, PFLS…SSSS, LVRL…ISKL, INLN…VFAP, LKSL…LSSD, PLSL…IFKT, LQNL…FWKL, RLSI…VLLN, and SSVQ…PLGS. Residues Asn145 and Asn160 are each glycosylated (N-linked (GlcNAc...) asparagine). The N-linked (GlcNAc...) asparagine glycan is linked to Asn207. A glycan (N-linked (GlcNAc...) asparagine) is linked at Asn247. Asn342 and Asn357 each carry an N-linked (GlcNAc...) asparagine glycan. The LRR 13; degenerate repeat unit spans residues 382-401; that stretch reads IYLSAWNNSFTGNIPLSICN. Residues Asn388 and Asn401 are each glycosylated (N-linked (GlcNAc...) asparagine). 10 LRR repeats span residues 402–423, 424–446, 448–471, 472–494, 495–519, 522–546, 591–615, 616–639, 640–663, and 665–688; these read RSSL…PQCL, SNLK…EFHS, AKTQ…LLNC, SSLR…WLKA, LPNL…DRGP, FPEL…FFVN, LTFY…IGLL, KELI…LANV, TELE…LGSL, and FLAY…QFSG. An N-linked (GlcNAc...) asparagine glycan is attached at Asn470. N-linked (GlcNAc...) asparagine glycans are attached at residues Asn622 and Asn638. Residues 734–754 form a helical membrane-spanning segment; it reads AVFFGYWPGLLLGLVMAHVIA. Over 755 to 800 the chain is Cytoplasmic; sequence SFKPKWFVKILGPAKGKQVDPVRLFMNLDSRWDSFNNKDTVEEEVI.

Belongs to the RLP family.

The protein resides in the cell membrane. This Arabidopsis thaliana (Mouse-ear cress) protein is Receptor like protein 26.